The sequence spans 494 residues: AAA-ATPase At2g18190 (494 aa).

The chain crosses the membrane as a helical span at residues 13–29 (SSLFTAYASLTGFLMLF). 251 to 258 (GPPGTGKS) contacts ATP. Residues 459 to 470 (TCRKLDGDDKHN) show a composition bias toward basic and acidic residues. Positions 459 to 494 (TCRKLDGDDKHNVSSTNDLKKTKKKKKGGKGKAKGN) are disordered. The span at 479–494 (KTKKKKKGGKGKAKGN) shows a compositional bias: basic residues.

It belongs to the AAA ATPase family. BCS1 subfamily. The cofactor is Mg(2+).

It localises to the membrane. The enzyme catalyses ATP + H2O = ADP + phosphate + H(+). This is AAA-ATPase At2g18190 from Arabidopsis thaliana (Mouse-ear cress).